Reading from the N-terminus, the 327-residue chain is Guanine nucleotide-binding protein subunit beta-like protein 1 (327 aa).

WD repeat units lie at residues 16–54 (LRGT…IWSL), 58–97 (RAVT…LWDL), 103–145 (AVVD…ILEM), 153–195 (ALKP…LWDV), 200–237 (VCSR…VWSL), 242–282 (ALQV…VFHW), and 286–323 (QPLA…LWSL).

As to expression, ubiquitous. Highly expressed in heart, liver, skeletal muscle, kidney, spleen, thymus and pancreas. Detected at low levels in lung, placenta and brain.

It is found in the cytoplasm. The protein resides in the nucleus. Acts as a critical regulator of DNA damage response (DDR) signaling via specifically regulating phosphatidylinositol 3-kinase-related protein kinase (PIKK) family proteins. In Homo sapiens (Human), this protein is Guanine nucleotide-binding protein subunit beta-like protein 1.